The chain runs to 219 residues: Protein Ac132 (219 aa).

The interval 1-34 is disordered; sequence MSDKTPTKKGGSHAMTLRERGVTKPPKKSEKLQQ. Basic and acidic residues predominate over residues 16–33; the sequence is TLRERGVTKPPKKSEKLQ. Positions 103–134 are NEBU-like domain; it reads YPMAYFVNTDYKLKLECARIRSDLLYKNKNEV.

In terms of assembly, interacts with viral envelope protein E18 and the DNA-binding protein p6.9.

Its subcellular location is the host cytoplasm. It localises to the host nucleus. The protein resides in the virion. Plays an essential role in nucleocapsid entry in host nucleus. May act by binding and stabilizing F-actin in the infected cell, which might attach to nucleocapsids and then push the nucleocapsids into the nucleus. The protein is Protein Ac132 (Ac132) of Autographa californica nuclear polyhedrosis virus (AcMNPV).